The primary structure comprises 326 residues: MDLTGLLITIVVAFLITVLLSPIFIPFLRRLNFGQSIREEGPQSHQKKTGTPTMGGLMIIFSIIITSLIMASRTDEGINYQVWLLIFVLFGYGLLGFLDDFIKVAMKRNLGLTSKQKLFGQIIIALVFYFILRNQGFSTVIYVPGTELQFDIGWFYAVLVIFMMVGASNAVNLTDGLDGLLAGTAAIAFGAFAIIAWYGIPDHVVAVFSLAVVGALLGFLVFNAHPAKVFMGDTGSLALGGAIAAISILLKLEILLIIIGGVFVIETLSVIIQVISFKTTGKRVFKMSPLHHHYELLGWSEWRVVTTFWLVGLLFAMLGVYIEVGM.

The next 10 membrane-spanning stretches (helical) occupy residues 5-25, 51-71, 82-102, 122-142, 148-168, 180-200, 204-224, 229-249, 252-272, and 304-324; these read GLLITIVVAFLITVLLSPIFI, TPTMGGLMIIFSIIITSLIMA, VWLLIFVLFGYGLLGFLDDFI, IIIALVFYFILRNQGFSTVIY, LQFDIGWFYAVLVIFMMVGAS, LLAGTAAIAFGAFAIIAWYGI, VVAVFSLAVVGALLGFLVFNA, VFMGDTGSLALGGAIAAISIL, LEILLIIIGGVFVIETLSVII, and VVTTFWLVGLLFAMLGVYIEV.

This sequence belongs to the glycosyltransferase 4 family. MraY subfamily. Mg(2+) is required as a cofactor.

The protein localises to the cell membrane. It catalyses the reaction UDP-N-acetyl-alpha-D-muramoyl-L-alanyl-gamma-D-glutamyl-meso-2,6-diaminopimeloyl-D-alanyl-D-alanine + di-trans,octa-cis-undecaprenyl phosphate = di-trans,octa-cis-undecaprenyl diphospho-N-acetyl-alpha-D-muramoyl-L-alanyl-D-glutamyl-meso-2,6-diaminopimeloyl-D-alanyl-D-alanine + UMP. It participates in cell wall biogenesis; peptidoglycan biosynthesis. Catalyzes the initial step of the lipid cycle reactions in the biosynthesis of the cell wall peptidoglycan: transfers peptidoglycan precursor phospho-MurNAc-pentapeptide from UDP-MurNAc-pentapeptide onto the lipid carrier undecaprenyl phosphate, yielding undecaprenyl-pyrophosphoryl-MurNAc-pentapeptide, known as lipid I. This is Phospho-N-acetylmuramoyl-pentapeptide-transferase from Oceanobacillus iheyensis (strain DSM 14371 / CIP 107618 / JCM 11309 / KCTC 3954 / HTE831).